The primary structure comprises 112 residues: uncharacterized protein (112 aa).

It to U.parvum UU089.1.

This is an uncharacterized protein from Synechocystis sp. (strain ATCC 27184 / PCC 6803 / Kazusa).